The sequence spans 124 residues: Small ribosomal subunit protein eS6 (124 aa).

It belongs to the eukaryotic ribosomal protein eS6 family.

The chain is Small ribosomal subunit protein eS6 from Thermoplasma acidophilum (strain ATCC 25905 / DSM 1728 / JCM 9062 / NBRC 15155 / AMRC-C165).